A 259-amino-acid chain; its full sequence is Phosphatidylglycerol--prolipoprotein diacylglyceryl transferase (259 aa).

Transmembrane regions (helical) follow at residues 12–32 (LSLH…VYLA), 46–66 (IIDF…IYYV), 83–103 (IWNG…VLFV), and 109–129 (VLNP…AQAI). A 1,2-diacyl-sn-glycero-3-phospho-(1'-sn-glycerol) is bound at residue Arg131. Transmembrane regions (helical) follow at residues 167-187 (VPTF…IMVW), 194-214 (LLDG…RLVI), and 226-246 (GIRV…VFIF).

The protein belongs to the Lgt family.

It localises to the cell membrane. It catalyses the reaction L-cysteinyl-[prolipoprotein] + a 1,2-diacyl-sn-glycero-3-phospho-(1'-sn-glycerol) = an S-1,2-diacyl-sn-glyceryl-L-cysteinyl-[prolipoprotein] + sn-glycerol 1-phosphate + H(+). It functions in the pathway protein modification; lipoprotein biosynthesis (diacylglyceryl transfer). Catalyzes the transfer of the diacylglyceryl group from phosphatidylglycerol to the sulfhydryl group of the N-terminal cysteine of a prolipoprotein, the first step in the formation of mature lipoproteins. This chain is Phosphatidylglycerol--prolipoprotein diacylglyceryl transferase, found in Streptococcus equi subsp. zooepidemicus (strain MGCS10565).